The following is a 205-amino-acid chain: uncharacterized protein (205 aa).

Catalysis depends on charge relay system residues Ser-119 and His-160.

This sequence belongs to the peptidase S51 family.

This is an uncharacterized protein from Listeria monocytogenes serovar 1/2a (strain ATCC BAA-679 / EGD-e).